A 547-amino-acid polypeptide reads, in one-letter code: CTP synthase (547 aa).

The amidoligase domain stretch occupies residues 1 to 265; that stretch reads MARYIFITGG…DQAVLDAFDI (265 aa). A CTP-binding site is contributed by serine 13. Residue serine 13 participates in UTP binding. ATP-binding positions include 14-19 and aspartate 71; that span reads SLGKGL. Residues aspartate 71 and glutamate 139 each contribute to the Mg(2+) site. Residues 146-148, 186-191, and lysine 222 contribute to the CTP site; these read DIE and KTKPTQ. UTP-binding positions include 186–191 and lysine 222; that span reads KTKPTQ. The region spanning 291–546 is the Glutamine amidotransferase type-1 domain; sequence KVAIVGKYTQ…IRAAKENSRL (256 aa). L-glutamine is bound at residue glycine 353. The active-site Nucleophile; for glutamine hydrolysis is cysteine 380. Residues 381–384, glutamate 404, and arginine 474 contribute to the L-glutamine site; that span reads LGMQ. Active-site residues include histidine 519 and glutamate 521.

It belongs to the CTP synthase family. Homotetramer.

It catalyses the reaction UTP + L-glutamine + ATP + H2O = CTP + L-glutamate + ADP + phosphate + 2 H(+). The enzyme catalyses L-glutamine + H2O = L-glutamate + NH4(+). The catalysed reaction is UTP + NH4(+) + ATP = CTP + ADP + phosphate + 2 H(+). Its pathway is pyrimidine metabolism; CTP biosynthesis via de novo pathway; CTP from UDP: step 2/2. Allosterically activated by GTP, when glutamine is the substrate; GTP has no effect on the reaction when ammonia is the substrate. The allosteric effector GTP functions by stabilizing the protein conformation that binds the tetrahedral intermediate(s) formed during glutamine hydrolysis. Inhibited by the product CTP, via allosteric rather than competitive inhibition. In terms of biological role, catalyzes the ATP-dependent amination of UTP to CTP with either L-glutamine or ammonia as the source of nitrogen. Regulates intracellular CTP levels through interactions with the four ribonucleotide triphosphates. This Roseobacter denitrificans (strain ATCC 33942 / OCh 114) (Erythrobacter sp. (strain OCh 114)) protein is CTP synthase.